We begin with the raw amino-acid sequence, 999 residues long: Embryonic polarity protein dorsal (999 aa).

Residues 1 to 44 (MFPNQNNGAAPGQGPAVDGQQSLNYNGLPAQQQQQLAQSTKNVR) are disordered. An RHD domain is found at 47 to 342 (PYVKITEQPA…TFWNLHRHLK (296 aa)). Phosphoserine; by PKA is present on S312. Disordered regions lie at residues 389–424 (FNHEESQQSEPALEQEQSVQQEQYTQEQSLQQEQYT) and 670–851 (QARK…SVSG). The segment covering 402 to 424 (EQEQSVQQEQYTQEQSLQQEQYT) has biased composition (low complexity). The Nuclear export signal motif lies at 668 to 677 (NSQARKPETP). Residues 677–686 (PMRPVPPVPP) are compositionally biased toward pro residues. Residues 710–719 (KQDSNAENRS) show a composition bias toward basic and acidic residues. Polar residues predominate over residues 720 to 734 (IEANTVQTKPSTGES). Residues 756-773 (KKPGFFSKLFSRRKSKPD) carry the Nuclear localization signal motif. Composition is skewed to low complexity over residues 819–829 (SNPAPAKSSPV) and 836–851 (SKLTKPVGRSVSSVSG).

Interacts with tamo via the nuclear localization signal. Interacts with emb, a component of the nuclear export complex. In terms of tissue distribution, in unchallenged larvae, expression of both isoforms is seen in fat body and gut (isoform A is more abundant). After immune challenge levels of both isoforms are enhanced.

It localises to the cytoplasm. The protein localises to the nucleus. In terms of biological role, embryonic developmental transcription factor. The lateral or ventral identity of a cell depends upon the concentration of this protein in its nucleus during the blastoderm stage. Acts as a morphogenetic transcription factor that specifically binds to the kappa-B-related consensus sequence 5'-GRGAAAANCC-3', located in the enhancer region of zygotic genes such as Zen, Twist, Snail and Decapentaplegic, promoting their expression. Part of a signaling pathway involving NF-kappa-B and Toll-related receptors, that functions in the apoptosis of unfit cells during cell competition. Mediates an immune response in larvae. May be part of a NF-kappa-B and Tollo signaling cascade that regulates development of the peripheral nervous system. This is Embryonic polarity protein dorsal (dl) from Drosophila melanogaster (Fruit fly).